We begin with the raw amino-acid sequence, 88 residues long: FAD assembly factor SdhE (88 aa).

It belongs to the SdhE FAD assembly factor family. In terms of assembly, monomer. Makes weak or transient interactions with SdhA. Interacts with YgfX. Interacts with FrdA.

It localises to the cytoplasm. It participates in antibiotic biosynthesis; prodigiosin biosynthesis. Functionally, an FAD assembly protein, which accelerates covalent attachment of the cofactor into other proteins. Plays an essential role in the assembly of succinate dehydrogenase (SDH, respiratory complex II), an enzyme complex that is a component of both the tricarboxylic acid cycle and the electron transport chain, and which couples the oxidation of succinate to fumarate with the reduction of ubiquinone (coenzyme Q) to ubiquinol. Required for flavinylation (covalent attachment of FAD) of the flavoprotein subunit SdhA of SDH. Required for flavinylation of the flavoprotein subunit FrdA of fumarate reductase (FRD). Flavinylation of SDH and FRD occurs in a similar but not identical manner, as site-specific mutations display subtle differences between them. Flavinylates SdhA in vivo in the absence of the other SDH subunits; SdhE mutants that do not flavinylate also interfere with wild-type activity in a possible dominant-negative fashion. Weakly binds to FAD and facilitates its binding to SdhA. Required for production of prodigiosin antibiotic (Pig); overproduction of SdhE in a deletion mutant leads to decreased synthesis of Pig compared to wild-type. Capable of flavinylating A.pasteurianus SdhA when the SDH operon and this gene are expressed in G.oxydans; flavinylation of SdhA is detected only in the presence of sdhE. The chain is FAD assembly factor SdhE from Serratia sp. (strain ATCC 39006) (Prodigiosinella confusarubida).